The following is a 629-amino-acid chain: Transmembrane 9 superfamily protein C1105.08 (629 aa).

Residues 1–26 (MLLPSIPSCSFSFVVFVSVLLQTCFS) form the signal peptide. Topologically, residues 27 to 266 (FQLTPLSPKN…MHIESRQIRW (240 aa)) are lumenal. N-linked (GlcNAc...) asparagine glycosylation is present at asparagine 157. The helical transmembrane segment at 267–287 (IFIIHSAIIDTFLIFVVSIIL) threads the bilayer. At 288 to 337 (YRTLNRDINKYNSAFVDQEDVQEDFGWKLVHGDVFRPPRRPMLFSILLGT) the chain is on the cytoplasmic side. Residues 338-358 (GAQLLFMSSGIVLFAIFGIVA) traverse the membrane as a helical segment. Residues 359-364 (PSRRGS) lie on the Lumenal side of the membrane. The chain crosses the membrane as a helical span at residues 365–385 (LATATVALFIISGFVSGYVSA). The Cytoplasmic segment spans residues 386–401 (LSYKLMQGMLRKRNLL). Residues 402–422 (LTPFVVPGFMLAAALFFNMVF) form a helical membrane-spanning segment. Residues 423–436 (WSKSSSSTVPFSSW) are Lumenal-facing. A helical transmembrane segment spans residues 437 to 457 (LLLIFLYLLFTVPLSFVGSLI). Over 458-488 (GFRSREFVPPVRTNQIPRQIPSHSIWLSSFP) the chain is Cytoplasmic. Residues 489 to 509 (SAIIGGSIPFLVILIELFSIL) form a helical membrane-spanning segment. The Lumenal segment spans residues 510–519 (DSLWFHPLYF). A helical membrane pass occupies residues 520–544 (MFGFSFFCFGILVTTCIMVSIITVY). Residues 545-558 (FQLCSENYNWWWRS) lie on the Cytoplasmic side of the membrane. Residues 559–579 (FITPGFCGIYVFIFSVFYWFF) form a helical membrane-spanning segment. The Lumenal portion of the chain corresponds to 580-598 (KISSSSLATAVLYFGYSLL). Residues 599 to 619 (ISVLVFFLCGSVGFFGAFLFV) traverse the membrane as a helical segment. Residues 620–629 (NKIYASIKID) lie on the Cytoplasmic side of the membrane.

Belongs to the nonaspanin (TM9SF) (TC 9.A.2) family.

Its subcellular location is the golgi apparatus membrane. The protein resides in the vacuole membrane. In Schizosaccharomyces pombe (strain 972 / ATCC 24843) (Fission yeast), this protein is Transmembrane 9 superfamily protein C1105.08.